The primary structure comprises 117 residues: Dolichyl-diphosphooligosaccharide--protein glycosyltransferase subunit DAD1 (117 aa).

Residues 1-33 (MAKTSSTTKDAQDLFHAIWSAYSATPTNLKIID) lie on the Cytoplasmic side of the membrane. Residues 34-54 (LYVVFAVFTALLQDVYMALVG) form a helical membrane-spanning segment. The Lumenal segment spans residues 55–57 (PFP). The chain crosses the membrane as a helical span at residues 58 to 78 (FNSFLSGVLSCVGTAVLAVCL). The Cytoplasmic portion of the chain corresponds to 79–96 (RIQVNKENKEFKDLGPER). Residues 97-117 (AFADFVLCNLVLHLVIMNFLG) form a helical membrane-spanning segment.

It belongs to the DAD/OST2 family. Component of the oligosaccharyltransferase (OST) complex.

Its subcellular location is the endoplasmic reticulum membrane. It participates in protein modification; protein glycosylation. Subunit of the oligosaccharyl transferase (OST) complex that catalyzes the initial transfer of a defined glycan (Glc(3)Man(9)GlcNAc(2) in eukaryotes) from the lipid carrier dolichol-pyrophosphate to an asparagine residue within an Asn-X-Ser/Thr consensus motif in nascent polypeptide chains, the first step in protein N-glycosylation. N-glycosylation occurs cotranslationally and the complex associates with the Sec61 complex at the channel-forming translocon complex that mediates protein translocation across the endoplasmic reticulum (ER). All subunits are required for a maximal enzyme activity. The sequence is that of Dolichyl-diphosphooligosaccharide--protein glycosyltransferase subunit DAD1 (DAD1) from Pisum sativum (Garden pea).